The chain runs to 296 residues: Homoserine kinase (296 aa).

84–94 (PLARGLGSSSS) lines the ATP pocket.

This sequence belongs to the GHMP kinase family. Homoserine kinase subfamily.

It localises to the cytoplasm. The enzyme catalyses L-homoserine + ATP = O-phospho-L-homoserine + ADP + H(+). Its pathway is amino-acid biosynthesis; L-threonine biosynthesis; L-threonine from L-aspartate: step 4/5. In terms of biological role, catalyzes the ATP-dependent phosphorylation of L-homoserine to L-homoserine phosphate. This chain is Homoserine kinase, found in Lactococcus lactis subsp. lactis (strain IL1403) (Streptococcus lactis).